The sequence spans 136 residues: Putative zinc finger protein 818 (136 aa).

The C2H2-type 1; degenerate zinc-finger motif lies at 64–83 (NVCGKVLSQNSHLVNHQRIH). The segment at 89-111 (YRCHECGKAFTQGSRFINHQIVH) adopts a C2H2-type 2 zinc-finger fold.

The protein belongs to the krueppel C2H2-type zinc-finger protein family.

The protein localises to the nucleus. In terms of biological role, may be involved in transcriptional regulation. This is Putative zinc finger protein 818 (ZNF818P) from Homo sapiens (Human).